A 219-amino-acid polypeptide reads, in one-letter code: 2-C-methyl-D-erythritol 4-phosphate cytidylyltransferase (219 aa).

It belongs to the IspD/TarI cytidylyltransferase family. IspD subfamily.

It carries out the reaction 2-C-methyl-D-erythritol 4-phosphate + CTP + H(+) = 4-CDP-2-C-methyl-D-erythritol + diphosphate. Its pathway is isoprenoid biosynthesis; isopentenyl diphosphate biosynthesis via DXP pathway; isopentenyl diphosphate from 1-deoxy-D-xylulose 5-phosphate: step 2/6. Functionally, catalyzes the formation of 4-diphosphocytidyl-2-C-methyl-D-erythritol from CTP and 2-C-methyl-D-erythritol 4-phosphate (MEP). This Bacteroides thetaiotaomicron (strain ATCC 29148 / DSM 2079 / JCM 5827 / CCUG 10774 / NCTC 10582 / VPI-5482 / E50) protein is 2-C-methyl-D-erythritol 4-phosphate cytidylyltransferase.